A 422-amino-acid polypeptide reads, in one-letter code: Tyrosine--tRNA ligase (422 aa).

An L-tyrosine-binding site is contributed by tyrosine 37. Residues 42-51 (PTEESLHIGH) carry the 'HIGH' region motif. L-tyrosine contacts are provided by tyrosine 175 and glutamine 179. Positions 235 to 239 (KFGKT) match the 'KMSKS' region motif. Lysine 238 contributes to the ATP binding site. The S4 RNA-binding domain occupies 357–414 (KDLQEALVLTSLAQSRTQAKNMIISNSISINTEKIRKNHIFHEKDKLFGKFTLLSRGK).

This sequence belongs to the class-I aminoacyl-tRNA synthetase family. TyrS type 1 subfamily. As to quaternary structure, homodimer.

It is found in the cytoplasm. The catalysed reaction is tRNA(Tyr) + L-tyrosine + ATP = L-tyrosyl-tRNA(Tyr) + AMP + diphosphate + H(+). In terms of biological role, catalyzes the attachment of tyrosine to tRNA(Tyr) in a two-step reaction: tyrosine is first activated by ATP to form Tyr-AMP and then transferred to the acceptor end of tRNA(Tyr). This chain is Tyrosine--tRNA ligase, found in Buchnera aphidicola subsp. Acyrthosiphon pisum (strain APS) (Acyrthosiphon pisum symbiotic bacterium).